The following is a 223-amino-acid chain: ATP-dependent Clp protease proteolytic subunit 2 (223 aa).

Positions 1–40 (MHAGSGNDMDITRMTPTRLDDEPDAPEPETREDDNKTLNS) are disordered. A compositionally biased stretch (acidic residues) spans 21 to 32 (DEPDAPEPETRE). The Nucleophile role is filled by S124. Residue H149 is part of the active site.

This sequence belongs to the peptidase S14 family. As to quaternary structure, fourteen ClpP subunits assemble into 2 heptameric rings which stack back to back to give a disk-like structure with a central cavity, resembling the structure of eukaryotic proteasomes.

It is found in the cytoplasm. The catalysed reaction is Hydrolysis of proteins to small peptides in the presence of ATP and magnesium. alpha-casein is the usual test substrate. In the absence of ATP, only oligopeptides shorter than five residues are hydrolyzed (such as succinyl-Leu-Tyr-|-NHMec, and Leu-Tyr-Leu-|-Tyr-Trp, in which cleavage of the -Tyr-|-Leu- and -Tyr-|-Trp bonds also occurs).. In terms of biological role, cleaves peptides in various proteins in a process that requires ATP hydrolysis. Has a chymotrypsin-like activity. Plays a major role in the degradation of misfolded proteins. This is ATP-dependent Clp protease proteolytic subunit 2 from Gluconobacter oxydans (strain 621H) (Gluconobacter suboxydans).